Reading from the N-terminus, the 396-residue chain is Elongation factor Tu (396 aa).

Positions 10–206 (KPHVNVGTIG…TLDEYIPEPE (197 aa)) constitute a tr-type G domain. The tract at residues 19 to 26 (GHVDHGKT) is G1. 19–26 (GHVDHGKT) contacts GTP. Thr-26 provides a ligand contact to Mg(2+). Residues 60-64 (GITIA) form a G2 region. Positions 81 to 84 (DCPG) are G3. GTP contacts are provided by residues 81–85 (DCPGH) and 136–139 (NKAD). A G4 region spans residues 136-139 (NKAD). Residues 174-176 (SAL) are G5.

This sequence belongs to the TRAFAC class translation factor GTPase superfamily. Classic translation factor GTPase family. EF-Tu/EF-1A subfamily. As to quaternary structure, monomer.

It localises to the cytoplasm. The catalysed reaction is GTP + H2O = GDP + phosphate + H(+). GTP hydrolase that promotes the GTP-dependent binding of aminoacyl-tRNA to the A-site of ribosomes during protein biosynthesis. The sequence is that of Elongation factor Tu from Alcanivorax borkumensis (strain ATCC 700651 / DSM 11573 / NCIMB 13689 / SK2).